A 159-amino-acid polypeptide reads, in one-letter code: Ubiquitin-conjugating enzyme E2 variant 1B (159 aa).

A UBC core domain is found at Pro-11–Met-159.

It belongs to the ubiquitin-conjugating enzyme family. In terms of assembly, heterodimer with UBC35 or UBC36. Expressed in roots, shoots, leaves, stems and flowers, but not in pollen.

Its function is as follows. Has no ubiquitin ligase activity on its own. The heterodimer with UBC catalyzes the synthesis of non-canonical poly-ubiquitin chains that are linked through 'Lys-63'. This type of poly-ubiquitination does not lead to protein degradation by the proteasome. Mediates transcriptional activation of target genes. May play a role in the control of progress through the cell cycle and differentiation. May play a role in the error-free DNA repair pathway and contributes to the survival of cells after DNA damage. The protein is Ubiquitin-conjugating enzyme E2 variant 1B (UEV1B) of Arabidopsis thaliana (Mouse-ear cress).